Consider the following 172-residue polypeptide: Putative phosphoesterase BCAH820_1309 (172 aa).

The active-site Proton donor is H34. Short sequence motifs (HXTX) lie at residues 34 to 37 and 115 to 118; these read HITL and HLTI. Residue H115 is the Proton acceptor of the active site.

This sequence belongs to the 2H phosphoesterase superfamily. YjcG family.

The polypeptide is Putative phosphoesterase BCAH820_1309 (Bacillus cereus (strain AH820)).